The following is a 458-amino-acid chain: Riboflavin transporter 2 (458 aa).

Transmembrane regions (helical) follow at residues 11–31, 38–58, 73–93, 97–117, and 146–166; these read LFGMGSWVAINGIWVELPLIV, WYLPSYLTVLIQMANVGPLFV, PVIYSIVGLGVVATFLLAFFW, VPLAGATHSVPLLVLCFLLSV, and GVSGLVPAVVALVQGVGVVHC. 4 N-linked (GlcNAc...) asparagine glycosylation sites follow: N168, N176, N182, and N199. A helical transmembrane segment spans residues 204 to 224; the sequence is VFFLFLSAMMVVCLAAFLLLN. Positions 249-274 are disordered; the sequence is DQALSLSHRPQEEKPMISSPDSHRRA. The next 5 membrane-spanning stretches (helical) occupy residues 279 to 299, 325 to 345, 349 to 369, 388 to 408, and 417 to 437; these read FGTGFYSGPELAFIFVVLAWV, LAATMAAVANPVACFIAMFLP, LVLIGLLTIVGTGFGTYIMAM, IVIAWVLFVLTLSYVKVIIGV, and ALVWCGAVVQLGSMLGALSMF.

This sequence belongs to the riboflavin transporter family.

The protein resides in the cell membrane. It catalyses the reaction riboflavin(in) = riboflavin(out). In terms of biological role, plasma membrane transporter mediating the uptake by cells of the water soluble vitamin B2/riboflavin that plays a key role in biochemical oxidation-reduction reactions of the carbohydrate, lipid, and amino acid metabolism. This Salmo salar (Atlantic salmon) protein is Riboflavin transporter 2 (rft2).